The chain runs to 461 residues: 3-oxoacyl-[acyl-carrier-protein] synthase, mitochondrial (461 aa).

A mitochondrion-targeting transit peptide spans 1 to 28 (MATSNLRRHLSASRLRLNRFISTSSSYH). One can recognise a Ketosynthase family 3 (KS3) domain in the interval 30–460 (HRRVVVTGLG…GTNASLLFAS (431 aa)). Residues Cys209, His350, and His389 each act as for beta-ketoacyl synthase activity in the active site.

It belongs to the thiolase-like superfamily. Beta-ketoacyl-ACP synthases family. In terms of assembly, homodimer. Expressed at the same level in leaves, roots, siliques and flowers.

It is found in the mitochondrion. The enzyme catalyses a fatty acyl-[ACP] + malonyl-[ACP] + H(+) = a 3-oxoacyl-[ACP] + holo-[ACP] + CO2. The catalysed reaction is butanoyl-[ACP] + malonyl-[ACP] + H(+) = 3-oxohexanoyl-[ACP] + holo-[ACP] + CO2. It catalyses the reaction hexanoyl-[ACP] + malonyl-[ACP] + H(+) = 3-oxooctanoyl-[ACP] + holo-[ACP] + CO2. It carries out the reaction octanoyl-[ACP] + malonyl-[ACP] + H(+) = 3-oxodecanoyl-[ACP] + holo-[ACP] + CO2. The enzyme catalyses decanoyl-[ACP] + malonyl-[ACP] + H(+) = 3-oxododecanoyl-[ACP] + holo-[ACP] + CO2. The catalysed reaction is dodecanoyl-[ACP] + malonyl-[ACP] + H(+) = 3-oxotetradecanoyl-[ACP] + holo-[ACP] + CO2. It catalyses the reaction tetradecanoyl-[ACP] + malonyl-[ACP] + H(+) = 3-oxohexadecanoyl-[ACP] + holo-[ACP] + CO2. It carries out the reaction hexadecanoyl-[ACP] + malonyl-[ACP] + H(+) = 3-oxooctadecanoyl-[ACP] + holo-[ACP] + CO2. It functions in the pathway lipid metabolism; fatty acid biosynthesis. Inhibited by cerulenin. Its function is as follows. Catalyzes all the condensation reaction of fatty acid synthesis by the addition to an acyl acceptor of two carbons from malonyl-ACP. Able to elongate saturated acyl chains from 4 to at least 16 carbons. Uses malonyl-CoA but not acetyl-CoA as primer substrate. When expressed in a heterologous system, reveals a bimodal distribution of products, with peaks at C8 and C14-C16. The major product of the reaction (octanoyl-ACP) is required for the lipoylation of essential mitochondrial proteins. Required for mitochondrial fatty acid synthesis (mtFAS). MtFAS are essential for photorespiration and plant development, probably by influencing mitochondrial membrane lipid composition and other lipid metabolic pathways. In Arabidopsis thaliana (Mouse-ear cress), this protein is 3-oxoacyl-[acyl-carrier-protein] synthase, mitochondrial.